The primary structure comprises 584 residues: DNA ligase (584 aa).

Glu249 provides a ligand contact to ATP. The N6-AMP-lysine intermediate role is filled by Lys251. 6 residues coordinate ATP: Arg256, Arg271, Glu301, Phe341, Arg416, and Lys422.

The protein belongs to the ATP-dependent DNA ligase family. Mg(2+) is required as a cofactor.

The catalysed reaction is ATP + (deoxyribonucleotide)n-3'-hydroxyl + 5'-phospho-(deoxyribonucleotide)m = (deoxyribonucleotide)n+m + AMP + diphosphate.. In terms of biological role, DNA ligase that seals nicks in double-stranded DNA during DNA replication, DNA recombination and DNA repair. This Pyrobaculum neutrophilum (strain DSM 2338 / JCM 9278 / NBRC 100436 / V24Sta) (Thermoproteus neutrophilus) protein is DNA ligase.